The following is a 736-amino-acid chain: Elongation factor 2 (736 aa).

The tr-type G domain occupies 18–234 (TRVRNIGIIA…VIDAYTASDK (217 aa)). Residues 27–34 (AHVDHGKT), 93–97 (DTPGH), and 147–150 (NKVD) each bind GTP. H603 carries the diphthamide modification.

The protein belongs to the TRAFAC class translation factor GTPase superfamily. Classic translation factor GTPase family. EF-G/EF-2 subfamily.

The protein localises to the cytoplasm. Its function is as follows. Catalyzes the GTP-dependent ribosomal translocation step during translation elongation. During this step, the ribosome changes from the pre-translocational (PRE) to the post-translocational (POST) state as the newly formed A-site-bound peptidyl-tRNA and P-site-bound deacylated tRNA move to the P and E sites, respectively. Catalyzes the coordinated movement of the two tRNA molecules, the mRNA and conformational changes in the ribosome. This is Elongation factor 2 from Saccharolobus islandicus (strain Y.N.15.51 / Yellowstone #2) (Sulfolobus islandicus).